We begin with the raw amino-acid sequence, 218 residues long: Glutathione S-transferase class-mu 26 kDa isozyme 51 (218 aa).

Residues 2–83 (PAKLGYWKIR…YIADKHGMLG (82 aa)) enclose the GST N-terminal domain. Glutathione-binding positions include 7-8 (YW), 41-45 (WFGDK), 54-55 (NL), and 67-68 (QS). The GST C-terminal domain maps to 85–203 (TPEERARISM…ESEKFIKWPL (119 aa)). Residue Tyr-111 coordinates substrate.

Belongs to the GST superfamily. Mu family. Homodimer.

It is found in the cytoplasm. The catalysed reaction is RX + glutathione = an S-substituted glutathione + a halide anion + H(+). Conjugation of reduced glutathione to a wide number of exogenous and endogenous hydrophobic electrophiles. In terms of biological role, GST isoenzymes appear to play a central role in the parasite detoxification system. Other functions are also suspected including a role in increasing the solubility of haematin in the parasite gut. The protein is Glutathione S-transferase class-mu 26 kDa isozyme 51 of Fasciola hepatica (Liver fluke).